The sequence spans 145 residues: Transcriptional regulator MraZ (145 aa).

2 consecutive SpoVT-AbrB domains span residues 5–50 and 81–124; these read TFNH…ALPQ and AHEV…DKAA.

The protein belongs to the MraZ family. As to quaternary structure, forms oligomers.

Its subcellular location is the cytoplasm. The protein localises to the nucleoid. This Anaeromyxobacter sp. (strain Fw109-5) protein is Transcriptional regulator MraZ.